We begin with the raw amino-acid sequence, 760 residues long: RxLR effector protein PSR2 (760 aa).

The signal sequence occupies residues 1 to 21; that stretch reads MGCRYAVLALAVAYFAGSIAA. Residues 47–62 carry the RxLR-dEER motif; that stretch reads RFLRAANTADERNEDR. Residues 87–134 form a WY1 repeat; sequence PLLSWFEKKKSPDYVFLKLKINKGKQQLFDHPDWNVWVQYTTSVVKSD. The 7 X 93 AA tandem repeats stretch occupies residues 87 to 760; that stretch reads PLLSWFEKKK…TTKYMERYGQ (674 aa). One copy of the LWY2 repeat lies at 135–221; sequence PEEAMIAALR…MKLYNSKPVN (87 aa). The LWY3 repeat unit spans residues 222–312; sequence KKQQVTLVSM…KYVDNYNRDF (91 aa). An LWY4 repeat occupies 313–403; that stretch reads PDEATTVMAT…KYVEDLNLKP (91 aa). Residues 404–496 form an LWY5 repeat; that stretch reads EHNDLQVSII…KFLEHYYKSF (93 aa). Residues 497–584 form an LWY6 repeat; that stretch reads PTPMMSALAK…RYLDEFNKKF (88 aa). The LWY7 repeat unit spans residues 585 to 760; sequence PDEKVSMTDT…TTKYMERYGQ (176 aa).

This sequence belongs to the RxLR effector family. Interacts with host dsRNA-binding protein DRB4.

The protein localises to the secreted. It localises to the host cell. In terms of biological role, secreted effector that possesses RNA silencing suppression activity by inhibiting the biogenesis of small RNAs in the host plant to promote enhanced susceptibility of host to the pathogen during infection. Interferes with secondary siRNA production by associating with host dsRNA-binding protein DRB4. Inhibits the host salicylic acid pathway during infection. This chain is RxLR effector protein PSR2, found in Phytophthora infestans (strain T30-4) (Potato late blight agent).